Reading from the N-terminus, the 276-residue chain is MPIDNLPPLREVINAYGLQANKSLGQNFLFDLNLTSKIARQAGNIEGKPVIEIGPGPGGLTRALLAKGAIVTVIERDKRCLPALLEIEKHYPKKLNLIFDDALKQDLSKLSETYPEKPRIIANLPYNIGTQLLLNWLLTTSWPPFYESMTLMFQREVAKRITATPQSPHYSRLSVLAGWRTIAKIAFDVPPQAFIPAPKVTSSVINIIPRPQPLACSVQKLSLVTKVAFGEKRKMLRQSLKTIGGKELLEKAGIDETRRAETLLIPEFITLANLMT.

Asn-27, Leu-29, Gly-54, Glu-75, Asp-101, and Asn-123 together coordinate S-adenosyl-L-methionine.

Belongs to the class I-like SAM-binding methyltransferase superfamily. rRNA adenine N(6)-methyltransferase family. RsmA subfamily.

It localises to the cytoplasm. It carries out the reaction adenosine(1518)/adenosine(1519) in 16S rRNA + 4 S-adenosyl-L-methionine = N(6)-dimethyladenosine(1518)/N(6)-dimethyladenosine(1519) in 16S rRNA + 4 S-adenosyl-L-homocysteine + 4 H(+). Specifically dimethylates two adjacent adenosines (A1518 and A1519) in the loop of a conserved hairpin near the 3'-end of 16S rRNA in the 30S particle. May play a critical role in biogenesis of 30S subunits. This is Ribosomal RNA small subunit methyltransferase A from Bartonella bacilliformis (strain ATCC 35685 / KC583 / Herrer 020/F12,63).